Consider the following 256-residue polypeptide: Trypsin alpha (256 aa).

The N-terminal stretch at 1-22 (MLKIVILLSAVVCALGGTVPEG) is a signal peptide. A propeptide spans 23–30 (LLPQLDGR) (activation peptide). Residues 31-254 (IVGGSATTIS…LRSWVISTAN (224 aa)) enclose the Peptidase S1 domain. Cysteine 56 and cysteine 72 form a disulfide bridge. Residues histidine 71 and aspartate 116 each act as charge relay system in the active site. Cystine bridges form between cysteine 180/cysteine 197 and cysteine 206/cysteine 230. Residue serine 210 is the Charge relay system of the active site.

This sequence belongs to the peptidase S1 family.

The protein resides in the secreted. It localises to the extracellular space. It carries out the reaction Preferential cleavage: Arg-|-Xaa, Lys-|-Xaa.. This Drosophila erecta (Fruit fly) protein is Trypsin alpha (alphaTry).